The primary structure comprises 255 residues: tRNA (guanine-N(1)-)-methyltransferase (255 aa).

Residues Gly-117 and Leu-137–Leu-142 each bind S-adenosyl-L-methionine.

The protein belongs to the RNA methyltransferase TrmD family. Homodimer.

Its subcellular location is the cytoplasm. It carries out the reaction guanosine(37) in tRNA + S-adenosyl-L-methionine = N(1)-methylguanosine(37) in tRNA + S-adenosyl-L-homocysteine + H(+). Specifically methylates guanosine-37 in various tRNAs. The polypeptide is tRNA (guanine-N(1)-)-methyltransferase (Paraburkholderia phymatum (strain DSM 17167 / CIP 108236 / LMG 21445 / STM815) (Burkholderia phymatum)).